Here is a 1059-residue protein sequence, read N- to C-terminus: Isoleucine--tRNA ligase (1059 aa).

The 'HIGH' region motif lies at proline 59–histidine 69. Residues lysine 637–serine 641 carry the 'KMSKS' region motif. ATP is bound at residue lysine 640.

This sequence belongs to the class-I aminoacyl-tRNA synthetase family. IleS type 2 subfamily. In terms of assembly, monomer. The cofactor is Zn(2+).

It is found in the cytoplasm. It carries out the reaction tRNA(Ile) + L-isoleucine + ATP = L-isoleucyl-tRNA(Ile) + AMP + diphosphate. In terms of biological role, catalyzes the attachment of isoleucine to tRNA(Ile). As IleRS can inadvertently accommodate and process structurally similar amino acids such as valine, to avoid such errors it has two additional distinct tRNA(Ile)-dependent editing activities. One activity is designated as 'pretransfer' editing and involves the hydrolysis of activated Val-AMP. The other activity is designated 'posttransfer' editing and involves deacylation of mischarged Val-tRNA(Ile). The sequence is that of Isoleucine--tRNA ligase from Mycobacterium leprae (strain TN).